The primary structure comprises 108 residues: Cytochrome bo(3) ubiquinol oxidase subunit 4 (108 aa).

The Cytoplasmic segment spans residues 1–16 (MNKYKKIKNNFDKEKK). Residues 17–37 (SYIVGFLFSLFLTIIPFFCTL) form a helical membrane-spanning segment. Residues 38–46 (NHLFSRKIN) are Extracellular-facing. Residues 47–67 (FFVILLCALSQIIIHFIYFLH) form a helical membrane-spanning segment. Residues 68–77 (LDFSKKNSWN) lie on the Cytoplasmic side of the membrane. A helical membrane pass occupies residues 78 to 98 (IISLLFILIIVFIIVFGSIWI). The Extracellular segment spans residues 99–108 (MYNLNHHVIL).

The protein belongs to the cytochrome c oxidase bacterial subunit 4 family. As to quaternary structure, heterooctamer of two A chains, two B chains, two C chains and two D chains.

The protein localises to the cell membrane. In terms of biological role, cytochrome bo(3) ubiquinol terminal oxidase is the component of the aerobic respiratory chain of E.coli that predominates when cells are grown at high aeration. Has proton pump activity across the membrane in addition to electron transfer, pumping 2 protons/electron. The chain is Cytochrome bo(3) ubiquinol oxidase subunit 4 (cyoD) from Buchnera aphidicola subsp. Schizaphis graminum (strain Sg).